Here is a 101-residue protein sequence, read N- to C-terminus: Small ribosomal subunit protein uS14 (101 aa).

It belongs to the universal ribosomal protein uS14 family. Part of the 30S ribosomal subunit. Contacts proteins S3 and S10.

In terms of biological role, binds 16S rRNA, required for the assembly of 30S particles and may also be responsible for determining the conformation of the 16S rRNA at the A site. This chain is Small ribosomal subunit protein uS14, found in Delftia acidovorans (strain DSM 14801 / SPH-1).